A 310-amino-acid chain; its full sequence is Acetylglutamate kinase (310 aa).

Residues 83-84 (GG), arginine 105, and asparagine 207 each bind substrate.

This sequence belongs to the acetylglutamate kinase family. ArgB subfamily.

It localises to the cytoplasm. The enzyme catalyses N-acetyl-L-glutamate + ATP = N-acetyl-L-glutamyl 5-phosphate + ADP. The protein operates within amino-acid biosynthesis; L-arginine biosynthesis; N(2)-acetyl-L-ornithine from L-glutamate: step 2/4. Its function is as follows. Catalyzes the ATP-dependent phosphorylation of N-acetyl-L-glutamate. The polypeptide is Acetylglutamate kinase (Ralstonia nicotianae (strain ATCC BAA-1114 / GMI1000) (Ralstonia solanacearum)).